A 590-amino-acid chain; its full sequence is L-asparaginase (590 aa).

One can recognise an Asparaginase/glutaminase domain in the interval 6 to 357 (AHVLVLYTGG…VEKKAMMVKN (352 aa)). Thr16 functions as the O-isoaspartyl threonine intermediate in the catalytic mechanism. An asparaginase region spans residues 44–351 (NDDDYVSTYY…KDCWELVEKK (308 aa)). Residues 85 to 87 (DSS) and 117 to 118 (TD) each bind substrate. 4 ANK repeats span residues 398-427 (IFPQLLCYAASNGDIEMLKALHENGVDLSV), 431-460 (NGRNALHVAASAGHVGAVKYLLTQGVSFHL), 497-526 (RLGVELCLCASYGDTETLNSWLAAGADINQ), and 530-559 (NGETALHIAVKSRNKQLVHYLLDRDADPYK).

It in the N-terminal section; belongs to the asparaginase 1 family. As to expression, may be present in the larval cuticle.

The catalysed reaction is L-asparagine + H2O = L-aspartate + NH4(+). This is L-asparaginase from Dirofilaria immitis (Canine heartworm).